The sequence spans 189 residues: uncharacterized protein (189 aa).

This is an uncharacterized protein from Aquifex aeolicus (strain VF5).